Reading from the N-terminus, the 1183-residue chain is DNA-directed RNA polymerase subunit beta (1183 aa).

This sequence belongs to the RNA polymerase beta chain family. In terms of assembly, the RNAP catalytic core consists of 2 alpha, 1 beta, 1 beta' and 1 omega subunit. When a sigma factor is associated with the core the holoenzyme is formed, which can initiate transcription.

The catalysed reaction is RNA(n) + a ribonucleoside 5'-triphosphate = RNA(n+1) + diphosphate. In terms of biological role, DNA-dependent RNA polymerase catalyzes the transcription of DNA into RNA using the four ribonucleoside triphosphates as substrates. This chain is DNA-directed RNA polymerase subunit beta, found in Staphylococcus aureus (strain Mu3 / ATCC 700698).